The following is a 348-amino-acid chain: Methylthioribose-1-phosphate isomerase (348 aa).

Substrate is bound by residues 48–50, arginine 90, and glutamine 195; that span reads RGA. Aspartate 236 functions as the Proton donor in the catalytic mechanism. 246-247 lines the substrate pocket; that stretch reads NK.

Belongs to the eIF-2B alpha/beta/delta subunits family. MtnA subfamily.

The catalysed reaction is 5-(methylsulfanyl)-alpha-D-ribose 1-phosphate = 5-(methylsulfanyl)-D-ribulose 1-phosphate. It functions in the pathway amino-acid biosynthesis; L-methionine biosynthesis via salvage pathway; L-methionine from S-methyl-5-thio-alpha-D-ribose 1-phosphate: step 1/6. Its function is as follows. Catalyzes the interconversion of methylthioribose-1-phosphate (MTR-1-P) into methylthioribulose-1-phosphate (MTRu-1-P). The chain is Methylthioribose-1-phosphate isomerase from Exiguobacterium sibiricum (strain DSM 17290 / CCUG 55495 / CIP 109462 / JCM 13490 / 255-15).